The primary structure comprises 325 residues: Probable flavonol synthase 5 (325 aa).

The disordered stretch occupies residues 1-21 (MEEERDHNASESSLPSLSKQL). The segment covering 10–21 (SESSLPSLSKQL) has biased composition (polar residues). The Fe2OG dioxygenase domain occupies 180-280 (TAEYVLRVNF…RISWPVFVAP (101 aa)). 188 to 190 (NFY) contributes to the 2-oxoglutarate binding site. 3 residues coordinate Fe cation: H205, D207, and H261. 271–273 (RIS) provides a ligand contact to 2-oxoglutarate.

The protein belongs to the iron/ascorbate-dependent oxidoreductase family. Fe(2+) is required as a cofactor. As to expression, expressed in young seedlings.

The enzyme catalyses a (2R,3R)-dihydroflavonol + 2-oxoglutarate + O2 = a flavonol + succinate + CO2 + H2O. It functions in the pathway secondary metabolite biosynthesis; flavonoid biosynthesis. This Arabidopsis thaliana (Mouse-ear cress) protein is Probable flavonol synthase 5 (FLS5).